A 421-amino-acid polypeptide reads, in one-letter code: Protein ECERIFERUM 2 (421 aa).

Methionine 1 is subject to N-acetylmethionine.

The protein belongs to the plant acyltransferase family. Expressed at high levels in the epidermis of stems and young siliques. Expressed in flowers.

The protein localises to the endoplasmic reticulum. It localises to the nucleus. Involved in biosynthesis of the epicuticular wax. Plays a role in very-long-chain fatty acid (VLCFA) biosynthesis and is required for C28 fatty acid elongation in stem. Despite its classification as a BAHD acyltransferase based on sequence homology, CER2 does not seem to share the catalytic mechanism of the members of the BAHD family. The protein is Protein ECERIFERUM 2 (CER2) of Arabidopsis thaliana (Mouse-ear cress).